The sequence spans 339 residues: Heat-inducible transcription repressor HrcA (339 aa).

This sequence belongs to the HrcA family.

Functionally, negative regulator of class I heat shock genes (grpE-dnaK-dnaJ and groELS operons). Prevents heat-shock induction of these operons. This chain is Heat-inducible transcription repressor HrcA, found in Clostridium perfringens (strain ATCC 13124 / DSM 756 / JCM 1290 / NCIMB 6125 / NCTC 8237 / Type A).